A 944-amino-acid chain; its full sequence is snRNA-activating protein complex subunit 4 homolog (944 aa).

The segment at 1–22 is disordered; it reads MSDLVMFEPGASTSTDVPTNTD. The span at 11–22 shows a compositional bias: polar residues; the sequence is ASTSTDVPTNTD. The Myb-like 1 domain maps to 177–244; the sequence is TSNFDRRQWT…AVKSKWYNEL (68 aa). Residues 245 to 301 form the HTH myb-type 1 domain; sequence NPKWNKEHWSNEEVEKLKYLRESPKFVSWPMLALNLGTNRTSYQCMEKYKTEVSQHS. The H-T-H motif DNA-binding region spans 273 to 297; that stretch reads WPMLALNLGTNRTSYQCMEKYKTEV. In terms of domain architecture, Myb-like 2 spans 304-350; it reads WSQDEDTKLIALTKITSINGHIQWDKVAQCMPGRTRQQVRTRFSHTL. HTH myb-type domains follow at residues 351–406 and 407–459; these read DASV…NRSA and HVNE…AAKL. DNA-binding regions (H-T-H motif) lie at residues 379–402 and 432–455; these read WAKVAQAVQNRNDSQCRERWTNVL and WAKCQMLLPKKTSRQLRRRYLQLI. Residues 911-921 are compositionally biased toward low complexity; sequence ARPARPPRSSA. The interval 911-935 is disordered; it reads ARPARPPRSSAGTPTPSHVSIDTES. The segment covering 922–935 has biased composition (polar residues); sequence GTPTPSHVSIDTES.

In terms of tissue distribution, broadly expressed in all tissues, including head, vulva and tail.

The protein localises to the nucleus. In terms of biological role, binds to the promoter regions of RNA polymerase II and III small-nuclear RNA genes, type 3 RNA polymerase III non-coding RNA genes, small nucleolar RNAs and transfer RNA genes. Required for expression of mature 21U-RNAs. The chain is snRNA-activating protein complex subunit 4 homolog from Caenorhabditis elegans.